A 518-amino-acid chain; its full sequence is 2-isopropylmalate synthase (518 aa).

Positions Val-24–Tyr-275 constitute a Pyruvate carboxyltransferase domain. 4 residues coordinate a divalent metal cation: Asp-33, His-213, His-215, and Asn-249.

This sequence belongs to the alpha-IPM synthase/homocitrate synthase family. In terms of assembly, homodimer. The cofactor is a divalent metal cation.

The catalysed reaction is 3-methyl-2-oxobutanoate + acetyl-CoA + H2O = (2S)-2-isopropylmalate + CoA + H(+). It participates in amino-acid biosynthesis; L-leucine biosynthesis; L-leucine from 3-methyl-2-oxobutanoate: step 1/4. Its function is as follows. Catalyzes the condensation of the acetyl group of acetyl-CoA with 3-methyl-2-oxobutanoate (2-oxoisovalerate) to form 3-carboxy-3-hydroxy-4-methylpentanoate (2-isopropylmalate). The sequence is that of 2-isopropylmalate synthase (leuA) from Methanocaldococcus jannaschii (strain ATCC 43067 / DSM 2661 / JAL-1 / JCM 10045 / NBRC 100440) (Methanococcus jannaschii).